We begin with the raw amino-acid sequence, 143 residues long: Small ribosomal subunit protein bS6 (143 aa).

Positions 95–143 are disordered; sequence GPDTEQSFIMKSKDDKGDKPERRRRDDDENGDVGVSNDSDNDGGNAEAA. Positions 105–121 are enriched in basic and acidic residues; that stretch reads KSKDDKGDKPERRRRDD.

The protein belongs to the bacterial ribosomal protein bS6 family.

Binds together with bS18 to 16S ribosomal RNA. The polypeptide is Small ribosomal subunit protein bS6 (Xylella fastidiosa (strain M23)).